We begin with the raw amino-acid sequence, 1183 residues long: M-phase phosphoprotein 9 (1183 aa).

Disordered stretches follow at residues Gly-28–Thr-52, Lys-300–Asp-334, and Ile-472–Gln-495. Over residues Gln-324 to Asp-334 the composition is skewed to basic and acidic residues. Residues Thr-401–Glu-800 are required for its centrosomal localization. An interaction with CEP97 region spans residues Lys-451–Thr-500. The span at Ser-483 to Gln-495 shows a compositional bias: low complexity. The stretch at Asp-609 to Ser-804 forms a coiled coil. A Phosphoserine; by TTBK2 modification is found at Ser-781. Residue Lys-784 forms a Glycyl lysine isopeptide (Lys-Gly) (interchain with G-Cter in ubiquitin) linkage. Position 788 is a phosphoserine; by TTBK2 (Ser-788). The tract at residues Asn-801–Pro-1031 is interaction with KIF24. Disordered stretches follow at residues Leu-863–Pro-894 and Asn-910–His-999. Residues Ser-921–Arg-936 show a composition bias toward polar residues. Positions Leu-949–Ser-967 are enriched in low complexity. Ser-994 carries the phosphoserine modification. Residues Arg-1109 to Phe-1174 adopt a coiled-coil conformation.

As to quaternary structure, interacts with CCP110, CEP97 and KIF24. Post-translationally, TTBK2-mediated phosphorylation at Ser-781 and Ser-788, promotes its ubiquitination at Lys-784 leading to proteasomal degradation, loss of MPHOSPH9 facilitates the removal of the CP110-CEP97 complex from the mother centrioles, promoting the initiation of ciliogenesis. Phosphorylated in M (mitotic) phase. Ubiquitinated at Lys-784, leading to proteasomal degradation.

It localises to the cytoplasm. Its subcellular location is the cytoskeleton. The protein localises to the microtubule organizing center. The protein resides in the centrosome. It is found in the centriole. It localises to the golgi apparatus membrane. Its function is as follows. Negatively regulates cilia formation by recruiting the CP110-CEP97 complex (a negative regulator of ciliogenesis) at the distal end of the mother centriole in ciliary cells. At the beginning of cilia formation, MPHOSPH9 undergoes TTBK2-mediated phosphorylation and degradation via the ubiquitin-proteasome system and removes itself and the CP110-CEP97 complex from the distal end of the mother centriole, which subsequently promotes cilia formation. This Homo sapiens (Human) protein is M-phase phosphoprotein 9 (MPHOSPH9).